Reading from the N-terminus, the 374-residue chain is Palmitoyltransferase PFA5 (374 aa).

Over methionine 1 to serine 13 the chain is Cytoplasmic. A helical transmembrane segment spans residues tryptophan 14–tyrosine 34. Over cysteine 35–glycine 55 the chain is Lumenal. The helical transmembrane segment at leucine 56 to isoleucine 76 threads the bilayer. Over leucine 77–leucine 173 the chain is Cytoplasmic. One can recognise a DHHC domain in the interval isoleucine 129 to alanine 179. Residues phenylalanine 174–valine 194 form a helical membrane-spanning segment. Residues tyrosine 195–threonine 217 lie on the Lumenal side of the membrane. The chain crosses the membrane as a helical span at residues leucine 218–tyrosine 238. Over methionine 239–tyrosine 374 the chain is Cytoplasmic.

This sequence belongs to the DHHC palmitoyltransferase family. PFA5 subfamily. In terms of processing, autopalmitoylated.

The protein localises to the membrane. It carries out the reaction L-cysteinyl-[protein] + hexadecanoyl-CoA = S-hexadecanoyl-L-cysteinyl-[protein] + CoA. In Saccharomyces cerevisiae (strain ATCC 204508 / S288c) (Baker's yeast), this protein is Palmitoyltransferase PFA5 (PFA5).